We begin with the raw amino-acid sequence, 101 residues long: MAKLSLIEREKKRAKLVAKYAEKRAALEAIVADQSKSEEERYEARLKLQALPRNANPTRQRNRCSITGRPRGTFRKFGLARNKLREIAFKGEIPGLTKASW.

This sequence belongs to the universal ribosomal protein uS14 family. In terms of assembly, part of the 30S ribosomal subunit. Contacts proteins S3 and S10.

Functionally, binds 16S rRNA, required for the assembly of 30S particles and may also be responsible for determining the conformation of the 16S rRNA at the A site. This chain is Small ribosomal subunit protein uS14, found in Ralstonia pickettii (strain 12J).